Consider the following 161-residue polypeptide: Nucleotide-binding protein Bphy_0527 (161 aa).

This sequence belongs to the YajQ family.

Nucleotide-binding protein. The polypeptide is Nucleotide-binding protein Bphy_0527 (Paraburkholderia phymatum (strain DSM 17167 / CIP 108236 / LMG 21445 / STM815) (Burkholderia phymatum)).